Here is a 126-residue protein sequence, read N- to C-terminus: Large ribosomal subunit protein bL12 (126 aa).

The protein belongs to the bacterial ribosomal protein bL12 family. As to quaternary structure, homodimer. Part of the ribosomal stalk of the 50S ribosomal subunit. Forms a multimeric L10(L12)X complex, where L10 forms an elongated spine to which 2 to 4 L12 dimers bind in a sequential fashion. Binds GTP-bound translation factors.

Its function is as follows. Forms part of the ribosomal stalk which helps the ribosome interact with GTP-bound translation factors. Is thus essential for accurate translation. In Acidovorax ebreus (strain TPSY) (Diaphorobacter sp. (strain TPSY)), this protein is Large ribosomal subunit protein bL12.